A 114-amino-acid chain; its full sequence is Tyrosine-protein phosphatase 11 (114 aa).

The 114-residue stretch at 1–114 (WRMIWEHNTR…EAKHTGPTIV (114 aa)) folds into the Tyrosine-protein phosphatase domain. D81 provides a ligand contact to substrate.

This sequence belongs to the protein-tyrosine phosphatase family.

It catalyses the reaction O-phospho-L-tyrosyl-[protein] + H2O = L-tyrosyl-[protein] + phosphate. The sequence is that of Tyrosine-protein phosphatase 11 (STY-11) from Styela plicata (Wrinkled sea squirt).